A 217-amino-acid polypeptide reads, in one-letter code: Adenylate kinase (217 aa).

10–15 (GIGKGT) is a binding site for ATP. The tract at residues 30–59 (STGDIFRKNFKENTELGTLSKKFIAQGLLV) is NMP. Residues Thr31, Arg36, 57–59 (LLV), 85–88 (GFPR), and Gln92 contribute to the AMP site. An LID region spans residues 126–163 (GRRICPECGKVYHIEKIPPKNPGICDKDQKTLIQREDD). Arg127 is an ATP binding site. Positions 130 and 133 each coordinate Zn(2+). 136–137 (VY) contributes to the ATP binding site. Zn(2+) contacts are provided by Cys150 and Asp153. 2 residues coordinate AMP: Arg160 and Arg171. Gln199 lines the ATP pocket.

This sequence belongs to the adenylate kinase family. In terms of assembly, monomer.

It is found in the cytoplasm. The enzyme catalyses AMP + ATP = 2 ADP. It participates in purine metabolism; AMP biosynthesis via salvage pathway; AMP from ADP: step 1/1. Catalyzes the reversible transfer of the terminal phosphate group between ATP and AMP. Plays an important role in cellular energy homeostasis and in adenine nucleotide metabolism. The polypeptide is Adenylate kinase (Aster yellows witches'-broom phytoplasma (strain AYWB)).